The primary structure comprises 418 residues: UDP-N-acetylglucosamine 1-carboxyvinyltransferase (418 aa).

Lys22 to Asn23 provides a ligand contact to phosphoenolpyruvate. Position 92 (Arg92) interacts with UDP-N-acetyl-alpha-D-glucosamine. The Proton donor role is filled by Cys116. Cys116 carries the post-translational modification 2-(S-cysteinyl)pyruvic acid O-phosphothioketal. UDP-N-acetyl-alpha-D-glucosamine-binding positions include Arg121–Leu125, Asp305, and Leu327.

Belongs to the EPSP synthase family. MurA subfamily.

The protein localises to the cytoplasm. It carries out the reaction phosphoenolpyruvate + UDP-N-acetyl-alpha-D-glucosamine = UDP-N-acetyl-3-O-(1-carboxyvinyl)-alpha-D-glucosamine + phosphate. It functions in the pathway cell wall biogenesis; peptidoglycan biosynthesis. Its function is as follows. Cell wall formation. Adds enolpyruvyl to UDP-N-acetylglucosamine. The sequence is that of UDP-N-acetylglucosamine 1-carboxyvinyltransferase from Campylobacter lari (strain RM2100 / D67 / ATCC BAA-1060).